Reading from the N-terminus, the 399-residue chain is Elongation factor Tu (399 aa).

The region spanning 10–209 (KPHVNIGTIG…KVDEYIPTPV (200 aa)) is the tr-type G domain. Residues 19–26 (GHVDHGKT) form a G1 region. Residue 19-26 (GHVDHGKT) participates in GTP binding. Threonine 26 contacts Mg(2+). The segment at 60 to 64 (GITIA) is G2. The segment at 81-84 (DCPG) is G3. GTP contacts are provided by residues 81 to 85 (DCPGH) and 136 to 139 (NKAD). The tract at residues 136-139 (NKAD) is G4. Positions 174–176 (SAL) are G5.

This sequence belongs to the TRAFAC class translation factor GTPase superfamily. Classic translation factor GTPase family. EF-Tu/EF-1A subfamily. Monomer.

The protein resides in the cytoplasm. The enzyme catalyses GTP + H2O = GDP + phosphate + H(+). GTP hydrolase that promotes the GTP-dependent binding of aminoacyl-tRNA to the A-site of ribosomes during protein biosynthesis. The chain is Elongation factor Tu from Campylobacter curvus (strain 525.92).